Here is a 204-residue protein sequence, read N- to C-terminus: Ribonuclease HII (204 aa).

An RNase H type-2 domain is found at 17–204; it reads TLIAGVDEVG…KPVKKVLGLL (188 aa). A divalent metal cation contacts are provided by Asp23, Glu24, and Asp115.

It belongs to the RNase HII family. It depends on Mn(2+) as a cofactor. Mg(2+) is required as a cofactor.

The protein localises to the cytoplasm. It carries out the reaction Endonucleolytic cleavage to 5'-phosphomonoester.. Its function is as follows. Endonuclease that specifically degrades the RNA of RNA-DNA hybrids. The sequence is that of Ribonuclease HII from Psychromonas ingrahamii (strain DSM 17664 / CCUG 51855 / 37).